The following is a 269-amino-acid chain: 4-hydroxy-tetrahydrodipicolinate reductase (269 aa).

NAD(+) contacts are provided by residues 8–13 (GAAGRM) and Glu34. Residue Arg35 participates in NADP(+) binding. Residues 98 to 100 (GTT) and 122 to 125 (APNY) each bind NAD(+). Catalysis depends on His155, which acts as the Proton donor/acceptor. Residue His156 coordinates (S)-2,3,4,5-tetrahydrodipicolinate. Lys159 (proton donor) is an active-site residue. Residue 165 to 166 (GT) coordinates (S)-2,3,4,5-tetrahydrodipicolinate.

Belongs to the DapB family.

The protein localises to the cytoplasm. It carries out the reaction (S)-2,3,4,5-tetrahydrodipicolinate + NAD(+) + H2O = (2S,4S)-4-hydroxy-2,3,4,5-tetrahydrodipicolinate + NADH + H(+). The enzyme catalyses (S)-2,3,4,5-tetrahydrodipicolinate + NADP(+) + H2O = (2S,4S)-4-hydroxy-2,3,4,5-tetrahydrodipicolinate + NADPH + H(+). The protein operates within amino-acid biosynthesis; L-lysine biosynthesis via DAP pathway; (S)-tetrahydrodipicolinate from L-aspartate: step 4/4. Functionally, catalyzes the conversion of 4-hydroxy-tetrahydrodipicolinate (HTPA) to tetrahydrodipicolinate. This is 4-hydroxy-tetrahydrodipicolinate reductase from Vibrio campbellii (strain ATCC BAA-1116).